The primary structure comprises 256 residues: Putative cysteine-rich repeat secretory protein 21 (256 aa).

An N-terminal signal peptide occupies residues M1 to S30. 2 Gnk2-homologous domains span residues Y37 to T139 and Y145 to F253.

Belongs to the cysteine-rich repeat secretory protein family.

It localises to the secreted. The chain is Putative cysteine-rich repeat secretory protein 21 (CRRSP21) from Arabidopsis thaliana (Mouse-ear cress).